We begin with the raw amino-acid sequence, 304 residues long: Ornithine carbamoyltransferase (304 aa).

Carbamoyl phosphate is bound by residues 47-50 (STRT), Arg-98, and 125-128 (HPCQ). L-ornithine-binding positions include Asn-156, Asp-221, and 225 to 226 (SM). Carbamoyl phosphate is bound by residues 262–263 (CL) and Arg-290.

This sequence belongs to the aspartate/ornithine carbamoyltransferase superfamily. OTCase family.

It localises to the cytoplasm. It carries out the reaction carbamoyl phosphate + L-ornithine = L-citrulline + phosphate + H(+). It functions in the pathway amino-acid biosynthesis; L-arginine biosynthesis; L-arginine from L-ornithine and carbamoyl phosphate: step 1/3. Functionally, reversibly catalyzes the transfer of the carbamoyl group from carbamoyl phosphate (CP) to the N(epsilon) atom of ornithine (ORN) to produce L-citrulline. This is Ornithine carbamoyltransferase from Methanococcus maripaludis (strain C5 / ATCC BAA-1333).